The chain runs to 423 residues: MSTRYHQAASDSYLELLKEATKRDLNLSDEDGMTPTLLAAYHGNLEALEIICSRGGDPDKCDIWGNTPLHYAASNGHTHCISFLVNFGANIFALDNDLKSPLDAAASREQKECVALLDKAATVQNTMNPKRVTRLKEQALKNARKQMKECERLQERHQNKMARTYSKEDSGTISSSHSTLSRSFLSTTSAGRFGSLSKGIKDTFKIKSKKNKDTTEQLEKDGRSGQRPVMEVFREEEEDSFPKDFKEKLHFSVEEDDDVQHESILNRPGLGSIVFSRNRVLDFEDISDSKRELGFKMPSELFQRQGAAGTVEEEEEEEEEEEEEKREANGTAGDLPWDEEEVEWEEDAVDATPLEVFLQSQHLEEFLPIFMREQIDLEALLLCSDEDLQNIHMQLGPRKKVLSAIDKRKQVLQQPGQLVDTSL.

The tract at residues 1-251 (MSTRYHQAAS…PKDFKEKLHF (251 aa)) is mediates localization to microvilli. ANK repeat units follow at residues 31-60 (DGMT…DPDK), 64-93 (WGNT…NIFA), and 97-126 (DLKS…VQNT). Positions 130–169 (KRVTRLKEQALKNARKQMKECERLQERHQNKMARTYSKED) form a coiled coil. Disordered regions lie at residues 158–181 (QNKM…STLS), 207–227 (KSKK…SGQR), and 303–335 (QRQG…AGDL). Positions 171-181 (GTISSSHSTLS) are enriched in low complexity. Basic and acidic residues predominate over residues 207–224 (KSKKNKDTTEQLEKDGRS). Positions 253-352 (VEEDDDVQHE…EWEEDAVDAT (100 aa)) are mediates interaction with MYO7B. The stretch at 301-335 (LFQRQGAAGTVEEEEEEEEEEEEEKREANGTAGDL) forms a coiled coil. The segment covering 311 to 324 (VEEEEEEEEEEEEE) has biased composition (acidic residues). One can recognise an SAM domain in the interval 357–409 (FLQSQHLEEFLPIFMREQIDLEALLLCSDEDLQNIHMQLGPRKKVLSAIDKRK). Residues 421-423 (TSL) carry the PDZ-binding; mediates interaction with USH1C motif.

Part of the IMAC/intermicrovillar adhesion complex/intermicrovillar tip-link complex composed of ANKS4B, MYO7B, USH1C, CDHR2 and CDHR5. Interacts with USH1C; the interaction is direct and is required for ANKS4B localization to the tip of microvilli. Interacts with MYO7B; the interaction is direct. May interact with HSPA5. In terms of tissue distribution, cochlea, kidney, lung, liver, pancreas, salivary gland and small intestine (at protein level). Expressed in kidney, small intestine, pancreas, liver and colon. Not detected in heart, spleen and brain.

It localises to the cell projection. It is found in the microvillus. Its function is as follows. As part of the intermicrovillar adhesion complex/IMAC plays a role in epithelial brush border differentiation, controlling microvilli organization and length. Plays a role in assembly of the complex. May play a role in cellular response to endoplasmic reticulum stress. The polypeptide is Ankyrin repeat and SAM domain-containing protein 4B (Mus musculus (Mouse)).